Reading from the N-terminus, the 446-residue chain is tRNA modification GTPase MnmE (446 aa).

R24, E81, and K120 together coordinate (6S)-5-formyl-5,6,7,8-tetrahydrofolate. One can recognise a TrmE-type G domain in the interval 216-368; the sequence is GLHAVLIGPP…LHTRLRELAL (153 aa). N226 contributes to the K(+) binding site. Residues 226–231, 245–251, and 270–273 each bind GTP; these read NAGKSS, TDVAGTT, and DTAG. Position 230 (S230) interacts with Mg(2+). The K(+) site is built by T245, V247, and T250. Residue T251 participates in Mg(2+) binding. (6S)-5-formyl-5,6,7,8-tetrahydrofolate is bound at residue K446.

Belongs to the TRAFAC class TrmE-Era-EngA-EngB-Septin-like GTPase superfamily. TrmE GTPase family. In terms of assembly, homodimer. Heterotetramer of two MnmE and two MnmG subunits. Requires K(+) as cofactor.

Its subcellular location is the cytoplasm. Exhibits a very high intrinsic GTPase hydrolysis rate. Involved in the addition of a carboxymethylaminomethyl (cmnm) group at the wobble position (U34) of certain tRNAs, forming tRNA-cmnm(5)s(2)U34. This Xanthomonas campestris pv. campestris (strain B100) protein is tRNA modification GTPase MnmE.